A 404-amino-acid polypeptide reads, in one-letter code: Argininosuccinate synthase (404 aa).

7-15 (AYSGGLDTS) is an ATP binding site. L-citrulline is bound by residues Tyr-85 and Ser-90. An ATP-binding site is contributed by Gly-115. 3 residues coordinate L-aspartate: Thr-117, Asn-121, and Asp-122. L-citrulline is bound at residue Asn-121. L-citrulline contacts are provided by Arg-125, Ser-178, Ser-187, Glu-264, and Tyr-276.

Belongs to the argininosuccinate synthase family. Type 1 subfamily. In terms of assembly, homotetramer.

It is found in the cytoplasm. It carries out the reaction L-citrulline + L-aspartate + ATP = 2-(N(omega)-L-arginino)succinate + AMP + diphosphate + H(+). The protein operates within amino-acid biosynthesis; L-arginine biosynthesis; L-arginine from L-ornithine and carbamoyl phosphate: step 2/3. This is Argininosuccinate synthase from Rhodopirellula baltica (strain DSM 10527 / NCIMB 13988 / SH1).